The chain runs to 650 residues: Acetyl-coenzyme A synthetase (650 aa).

CoA contacts are provided by residues Arg-191 to Arg-194, Thr-311, and Asn-335. ATP-binding positions include Gly-387–Pro-389, Asp-411–Thr-416, Asp-500, and Arg-515. Ser-523 serves as a coordination point for CoA. Arg-526 is an ATP binding site. Positions 537, 539, and 542 each coordinate Mg(2+). Arg-584 contributes to the CoA binding site. Lys-609 carries the post-translational modification N6-acetyllysine.

This sequence belongs to the ATP-dependent AMP-binding enzyme family. Mg(2+) serves as cofactor. Acetylated. Deacetylation by the SIR2-homolog deacetylase activates the enzyme.

It carries out the reaction acetate + ATP + CoA = acetyl-CoA + AMP + diphosphate. In terms of biological role, catalyzes the conversion of acetate into acetyl-CoA (AcCoA), an essential intermediate at the junction of anabolic and catabolic pathways. AcsA undergoes a two-step reaction. In the first half reaction, AcsA combines acetate with ATP to form acetyl-adenylate (AcAMP) intermediate. In the second half reaction, it can then transfer the acetyl group from AcAMP to the sulfhydryl group of CoA, forming the product AcCoA. The chain is Acetyl-coenzyme A synthetase from Shewanella sp. (strain MR-7).